A 276-amino-acid polypeptide reads, in one-letter code: Myoblast determination protein 1 homolog 1 (276 aa).

The bHLH domain occupies 84–135 (DRRKAATMRERRRLSKVNDAFETLKRCTSTNPNQRLPKVDILRNAISYIESL). The segment at 228 to 253 (CPAVQDGSEGSSPCSPGDGSIASENG) is disordered.

Efficient DNA binding requires dimerization with another bHLH protein.

Its subcellular location is the nucleus. Functionally, may act as a transcriptional activator that promotes transcription of muscle-specific target genes and plays a role in muscle differentiation. The polypeptide is Myoblast determination protein 1 homolog 1 (myod1) (Oncorhynchus mykiss (Rainbow trout)).